The chain runs to 390 residues: MGCSWLSCHRREATEVDGEIAAIDNVKIYKYREIRQATDDFSAENKIGEGGFGSVYKGCLKDGKLAAIKVLSAESRQGVKEFLTEINVISEIQHENLVKLYGCCVEGNHRILVYNFLENNSLDKTLLAGGYTRSGIQFDWSSRANICVGVAKGLAFLHEEVRPHIIHRDIKASNILLDKYLSPKISDFGLARLMPPNMTHVSTRVAGTIGYLAPEYAVRGQLTRKADIYSFGVLLMEIVSGRSNKNTRLPTEYQYLLERAWELYERNELVDLVDSGLNGVFDAEEACRYLKIGLLCTQDSPKLRPSMSTVVRLLTGEKDIDYKKISRPGLISDFMDLKVRGPVATKTEQVNRQNYTNPSSSSNGSSRDHSNAYSSGASSANAGNTFSSTI.

One can recognise a Protein kinase domain in the interval 41–320 (FSAENKIGEG…VRLLTGEKDI (280 aa)). ATP is bound by residues 47 to 55 (IGEGGFGSV) and Lys-69. Tyr-114 is subject to Phosphotyrosine. Asp-169 functions as the Proton acceptor in the catalytic mechanism. Ser-173 and Ser-202 each carry phosphoserine. Phosphothreonine is present on residues Thr-203 and Thr-208. At Tyr-216 the chain carries Phosphotyrosine. The disordered stretch occupies residues 345–390 (TKTEQVNRQNYTNPSSSSNGSSRDHSNAYSSGASSANAGNTFSSTI). Residues 354-390 (NYTNPSSSSNGSSRDHSNAYSSGASSANAGNTFSSTI) show a composition bias toward low complexity.

This sequence belongs to the protein kinase superfamily. Ser/Thr protein kinase family. In terms of assembly, interacts with and phosphorylates 14-3-3 proteins. Binds to GRF6 at the plasma membrane. Autophosphorylated.

Its subcellular location is the cell membrane. It catalyses the reaction L-seryl-[protein] + ATP = O-phospho-L-seryl-[protein] + ADP + H(+). The catalysed reaction is L-threonyl-[protein] + ATP = O-phospho-L-threonyl-[protein] + ADP + H(+). Its activity is regulated as follows. Activated by cold. Its function is as follows. Negative regulator of freezing tolerance that phosphorylates 14-3-3 proteins (e.g. GRF6) thus triggering their translocation from the cytosol to the nucleus in response to cold stress. In Arabidopsis thaliana (Mouse-ear cress), this protein is Cold-responsive protein kinase 1.